We begin with the raw amino-acid sequence, 283 residues long: ATP phosphoribosyltransferase (283 aa).

Belongs to the ATP phosphoribosyltransferase family. Long subfamily. Mg(2+) is required as a cofactor.

It is found in the cytoplasm. It carries out the reaction 1-(5-phospho-beta-D-ribosyl)-ATP + diphosphate = 5-phospho-alpha-D-ribose 1-diphosphate + ATP. It functions in the pathway amino-acid biosynthesis; L-histidine biosynthesis; L-histidine from 5-phospho-alpha-D-ribose 1-diphosphate: step 1/9. With respect to regulation, feedback inhibited by histidine. Functionally, catalyzes the condensation of ATP and 5-phosphoribose 1-diphosphate to form N'-(5'-phosphoribosyl)-ATP (PR-ATP). Has a crucial role in the pathway because the rate of histidine biosynthesis seems to be controlled primarily by regulation of HisG enzymatic activity. In Rhodococcus opacus (strain B4), this protein is ATP phosphoribosyltransferase.